The chain runs to 372 residues: MSMSPKHTTPFSVSDILSPLEESYKKVGMEGGGLGAPLAAYRQGQAAPPAAAMQQHAVGHHGAVTAAYHMTAAGVPQLSHSAVGGYCNGNLGNMSELPPYQDTMRNSASGPGWYGANPDPRFPAISRFMGPASGMNMSGMGGLGSLGDVSKNMAPLPSAPRRKRRVLFSQAQVYELERRFKQQKYLSAPEREHLASMIHLTPTQVKIWFQNHRYKMKRQAKDKAAQQQLQQDSGGGGGGGGGAGCPQQQQAQQQSPRRVAVPVLVKDGKPCQAGAPAPGAASLQSHAQQQAQQQAQAAQAAAAAISVGSGGAGLGAHPGHQPGSAGQSPDLAHHAASPAGLQGQVSSLSHLNSSGSDYGAMSCSTLLYGRTW.

Positions 161-220 (RRKRRVLFSQAQVYELERRFKQQKYLSAPEREHLASMIHLTPTQVKIWFQNHRYKMKRQA) form a DNA-binding region, homeobox. Disordered regions lie at residues 219-258 (QAKD…SPRR), 269-288 (KPCQ…SHAQ), and 312-340 (AGLG…SPAG). The span at 233-244 (SGGGGGGGGGAG) shows a compositional bias: gly residues. Residues 245–254 (CPQQQQAQQQ) are compositionally biased toward low complexity. Phosphoserine is present on S255. Residues 273–288 (AGAPAPGAASLQSHAQ) show a composition bias toward low complexity.

The protein belongs to the NK-2 homeobox family. As to quaternary structure, interacts with WWTR1. Post-translationally, phosphorylated on serine residues by STK3/MST2. Thyroid, lung and brain.

Its subcellular location is the nucleus. In terms of biological role, transcription factor that binds and activates the promoter of thyroid specific genes such as thyroglobulin, thyroperoxidase, and thyrotropin receptor. Crucial in the maintenance of the thyroid differentiation phenotype. May play a role in lung development and surfactant homeostasis. Forms a regulatory loop with GRHL2 that coordinates lung epithelial cell morphogenesis and differentiation. Activates the transcription of GNRHR and plays a role in enhancing the circadian oscillation of its gene expression. Represses the transcription of the circadian transcriptional repressor NR1D1. This Mus musculus (Mouse) protein is Homeobox protein Nkx-2.1.